Consider the following 170-residue polypeptide: Cathelicidin antimicrobial peptide (170 aa).

Residues 1–30 (MKTQRDGHSLGGWSLMLLLLGLLMPLAIVA) form the signal peptide. Positions 31–131 (QVLSYKEAVL…DISCDKDNRR (101 aa)) are cleaved as a propeptide — cathelin-like domain (CLD). 2 cysteine pairs are disulfide-bonded: Cys-86-Cys-97 and Cys-108-Cys-125. Residues 150–162 (FKRIVQRIKDFLQ) form an active core region.

Belongs to the cathelicidin family. In terms of assembly, monomer, homodimer or homotrimer (in vitro). Oligomerizes as tetra- or hexamer in solution (in vitro). In terms of processing, proteolytically cleaved by proteinase PRTN3 into antibacterial peptide LL-37. Proteolytically cleaved by cathepsin CTSG and neutrophil elastase ELANE. Resistant to proteolytic degradation in solution, and when bound to both zwitterionic (mimicking mammalian membranes) and negatively charged membranes (mimicking bacterial membranes). Post-translationally, after secretion onto the skin surface, the CAMP gene product is processed by a serine protease-dependent mechanism into multiple novel antimicrobial peptides distinct from and shorter than cathelicidin LL-37. These peptides show enhanced antimicrobial action, acquiring the ability to kill skin pathogens such as S.aureus, E.coli and C.albicans. These peptides have lost the ability to stimulate CXCL8/IL8 release from keratinocytes. The peptides act synergistically, killing bacteria at lower concentrations when present together, and maintain activity at increased salt condition.

The protein localises to the secreted. It localises to the vesicle. In terms of biological role, antimicrobial protein that is an integral component of the innate immune system. Binds to bacterial lipopolysaccharides (LPS). Acts via neutrophil N-formyl peptide receptors to enhance the release of CXCL2. Postsecretory processing generates multiple cathelicidin antimicrobial peptides with various lengths which act as a topical antimicrobial defense in sweat on skin. The unprocessed precursor form, cathelicidin antimicrobial peptide, inhibits the growth of Gram-negative E.coli and E.aerogenes with efficiencies comparable to that of the mature peptide LL-37 (in vitro). Its function is as follows. Antimicrobial peptide that is an integral component of the innate immune system. Binds to bacterial lipopolysaccharides (LPS). Causes membrane permeabilization by forming transmembrane pores (in vitro). Causes lysis of E.coli. Exhibits antimicrobial activity against Gram-negative bacteria such as P.aeruginosa, S.typhimurium, E.aerogenes, E.coli and P.syringae, Gram-positive bacteria such as L.monocytogenes, S.epidermidis, S.pyogenes and S.aureus, as well as vancomycin-resistant enterococci (in vitro). Exhibits antimicrobial activity against methicillin-resistant S.aureus, P.mirabilis, and C.albicans in low-salt media, but not in media containing 100 mM NaCl (in vitro). Forms chiral supramolecular assemblies with quinolone signal (PQS) molecules of P.aeruginosa, which may lead to interference of bacterial quorum signaling and perturbance of bacterial biofilm formation. May form supramolecular fiber-like assemblies on bacterial membranes. Induces cytokine and chemokine producation as well as TNF/TNFA and CSF2/GMCSF production in normal human keratinocytes. Exhibits hemolytic activity against red blood cells. Functionally, exhibits antimicrobial activity against E.coli and B.megaterium (in vitro). In Hylobates moloch (Silvery gibbon), this protein is Cathelicidin antimicrobial peptide.